The sequence spans 81 residues: Styelin-E (81 aa).

The signal sequence occupies residues 1 to 22 (MQMKATILIVLVALFMIQQSEA). 6'-bromotryptophan is present on W24. R26 is subject to 3,4-dihydroxyarginine. K27, K30, and K34 each carry 4,5-dihydroxylysine. 2 positions are modified to 3',4'-dihydroxyphenylalanine: Y36 and Y37. K38 carries the post-translational modification 4,5-dihydroxylysine. K40 is subject to 5-hydroxylysine. 3',4'-dihydroxyphenylalanine is present on residues Y41 and Y42. K44 is subject to 5-hydroxylysine. L54 is modified (leucine amide). Positions 56–81 (DMTDEEFQDFMKEVEQAREEELQSRQ) are cleaved as a propeptide — removed in mature form.

In terms of processing, contains L-DOPA (3',4'-dihydroxyphenylalanine). In terms of tissue distribution, hemocytes and pharyngeal tissues.

It localises to the secreted. Functionally, bactericidal against several Gram-positive and Gram-negative bacteria. This Styela clava (Sea squirt) protein is Styelin-E.